Reading from the N-terminus, the 261-residue chain is uncharacterized protein (261 aa).

Residues 20–34 (TMSTPFLESDNSNTQ) are compositionally biased toward polar residues. A disordered region spans residues 20–55 (TMSTPFLESDNSNTQSISGRIGSNNNSNSKNSGGIG). Residues 35–51 (SISGRIGSNNNSNSKNS) show a composition bias toward low complexity. The next 3 helical transmembrane spans lie at 113-133 (LFSG…ILLL), 183-200 (LIFW…ILFF), and 204-226 (IISL…MANV).

The protein belongs to the TVP23 family.

The protein localises to the membrane. This is an uncharacterized protein from Dictyostelium discoideum (Social amoeba).